Here is a 78-residue protein sequence, read N- to C-terminus: Large ribosomal subunit protein bL28 (78 aa).

Positions M1 to H20 are disordered.

Belongs to the bacterial ribosomal protein bL28 family.

The polypeptide is Large ribosomal subunit protein bL28 (Vibrio atlanticus (strain LGP32) (Vibrio splendidus (strain Mel32))).